The chain runs to 195 residues: Imidazole glycerol phosphate synthase subunit HisH (195 aa).

Residues M1–L195 form the Glutamine amidotransferase type-1 domain. Residue C72 is the Nucleophile of the active site. Catalysis depends on residues H177 and E179.

Heterodimer of HisH and HisF.

The protein resides in the cytoplasm. It catalyses the reaction 5-[(5-phospho-1-deoxy-D-ribulos-1-ylimino)methylamino]-1-(5-phospho-beta-D-ribosyl)imidazole-4-carboxamide + L-glutamine = D-erythro-1-(imidazol-4-yl)glycerol 3-phosphate + 5-amino-1-(5-phospho-beta-D-ribosyl)imidazole-4-carboxamide + L-glutamate + H(+). It carries out the reaction L-glutamine + H2O = L-glutamate + NH4(+). It functions in the pathway amino-acid biosynthesis; L-histidine biosynthesis; L-histidine from 5-phospho-alpha-D-ribose 1-diphosphate: step 5/9. Functionally, IGPS catalyzes the conversion of PRFAR and glutamine to IGP, AICAR and glutamate. The HisH subunit catalyzes the hydrolysis of glutamine to glutamate and ammonia as part of the synthesis of IGP and AICAR. The resulting ammonia molecule is channeled to the active site of HisF. The protein is Imidazole glycerol phosphate synthase subunit HisH of Thermococcus kodakarensis (strain ATCC BAA-918 / JCM 12380 / KOD1) (Pyrococcus kodakaraensis (strain KOD1)).